Consider the following 244-residue polypeptide: Inner kinetochore subunit fta7 (244 aa).

This sequence belongs to the CENP-Q/OKP1 family. As to quaternary structure, component of the heterotetrameric kinetochore subcomplex COMA, which consists of fta2, fta7, mal2 and mis17. The COMA subcomplex is part of a larger constitutive centromere-associated network (CCAN) (also known as central kinetochore Sim4 complex in fission yeast), which is composed of at least cnl2, cnp3, cnp20, fta1, fta2, fta3, fta4, fta6, fta7, mal2, mhf1, mhf2, mis6, mis15, mis17, sim4 and wip1.

It localises to the nucleus. It is found in the chromosome. The protein localises to the centromere. The protein resides in the kinetochore. Its subcellular location is the cytoplasm. It localises to the cytoskeleton. It is found in the microtubule organizing center. The protein localises to the spindle pole body. Component of the kinetochore, a multiprotein complex that assembles on centromeric DNA and attaches chromosomes to spindle microtubules, mediating chromosome segregation and sister chromatid segregation during meiosis and mitosis. Component of the inner kinetochore COMA complex, which connects centromere-associated proteins and the outer kinetochore. COMA interacts with other inner kinetochore proteins to form the inner kinetochore constitutive centromere-associated network (CCAN), which serves as a structural platform for outer kinetochore assembly. The polypeptide is Inner kinetochore subunit fta7 (fta7) (Schizosaccharomyces pombe (strain 972 / ATCC 24843) (Fission yeast)).